An 82-amino-acid polypeptide reads, in one-letter code: Ferredoxin (82 aa).

The 29-residue stretch at 3-31 folds into the 4Fe-4S ferredoxin-type domain; the sequence is KYTIVDKDTCIACGACGAAAPDIYDYDDE. Cys-12, Cys-15, Cys-18, and Cys-62 together coordinate [4Fe-4S] cluster.

[4Fe-4S] cluster is required as a cofactor.

Its function is as follows. Ferredoxins are iron-sulfur proteins that transfer electrons in a wide variety of metabolic reactions. This ferredoxin may act as a phosphodonor to cytochrome P450 BioI. The sequence is that of Ferredoxin (fer) from Bacillus subtilis (strain 168).